The following is a 345-amino-acid chain: Transcription initiation factor IIB (345 aa).

The TFIIB-type zinc finger occupies 20-53; it reads IVLTCPECKVYPPKIVERFSEGDVVCALCGLVLS. Zn(2+) is bound by residues Cys-24, Cys-27, Cys-45, and Cys-48. Residues 65–78 show a composition bias toward basic and acidic residues; the sequence is TFSNDDHNGDDPSR. Positions 65 to 93 are disordered; sequence TFSNDDHNGDDPSRVGEASNPLLDGNNLS. 2 repeat units span residues 136-212 and 242-318.

Belongs to the TFIIB family. Associates with TFIID-IIA (DA complex) to form TFIID-IIA-IIB (DAB-complex) which is then recognized by polymerase II.

It is found in the nucleus. Its function is as follows. General factor that plays a major role in the activation of eukaryotic genes transcribed by RNA polymerase II. The polypeptide is Transcription initiation factor IIB (SUA7) (Saccharomyces cerevisiae (strain ATCC 204508 / S288c) (Baker's yeast)).